The sequence spans 571 residues: Glycine--tRNA ligase (571 aa).

Residues Arg-99 and Glu-165 each coordinate substrate. Residues Arg-197–Glu-199, Ile-207–Phe-212, Glu-324–Cys-325, and Gly-443–Arg-446 each bind ATP. Position 212–216 (Phe-212–Glu-216) interacts with substrate. Glu-439–Gly-443 is a substrate binding site.

Belongs to the class-II aminoacyl-tRNA synthetase family.

It localises to the cytoplasm. It carries out the reaction tRNA(Gly) + glycine + ATP = glycyl-tRNA(Gly) + AMP + diphosphate. Functionally, catalyzes the attachment of glycine to tRNA(Gly). The polypeptide is Glycine--tRNA ligase (Pyrococcus abyssi (strain GE5 / Orsay)).